Consider the following 488-residue polypeptide: Beta-1,3-glucan-binding protein (488 aa).

The signal sequence occupies residues 1–17 (MFVTFICFLACLTCSYG). Positions 18 to 135 (QPRAQQYVVP…GTPADTSLEP (118 aa)) are binds to curdlan, laminarihexaose and laminarin. The complex formation with laminarin induces self-association of the complexes into a macro structure, likely containing six protein and three laminarin molecules. The macro structures may form a platform on a microbial surface for recruitment of downstream proteases, as a means of amplification of the initial signal of pathogen recognition for the activation of the phenoloxidase cascade. Positions 18–198 (QPRAQQYVVP…LKDLANWEAE (181 aa)) are binds to curdlan, lipopolysaccharide and lipoteichoic acid, activates the phenoloxidase cascade and is resistant to proteolytic degradation by trypsin or chymotrypsin, but is not as effective as the full-length protein in aggregation of microorganisms. One can recognise a CBM39 domain in the interval 24 to 123 (YVVPSAKLEA…GEWTVTEFVN (100 aa)). Positions 24-127 (YVVPSAKLEA…VTEFVNEDGT (104 aa)) are binds to laminarihexaose and laminarin. Substrate is bound by residues aspartate 72, 99 to 101 (WTY), and arginine 110. Residues 125 to 158 (DGTPADTSLEPTTAPTPVRPDQPNQPIPTHRPDP) are disordered. Residues 129–139 (ADTSLEPTTAP) show a composition bias toward polar residues. Residues 141-150 (PVRPDQPNQP) show a composition bias toward pro residues. Residues 144-488 (PDQPNQPIPT…KVDYVRVYAL (345 aa)) form the GH16 domain. The interval 199–488 (VKFPEEPDYP…KVDYVRVYAL (290 aa)) is binds to laminarin, but not to curdlan, does not activate the phenoloxidase cascade, is susceptible to proteinase digestion by trypsin or chymotrypsin and does not cause aggregation of microorganisms. Asparagine 373 and asparagine 453 each carry an N-linked (GlcNAc...) asparagine glycan.

Belongs to the insect beta-1,3-glucan binding protein family. Monomer. In terms of processing, the N-terminus is blocked. As to expression, fat body and hemolymph.

The protein resides in the secreted. Involved in the recognition of invading microorganisms causing their aggregation. Activates the phenoloxidase cascade. Binds specifically to beta-1,3-glucan. Binds to curdlan, a linear water-insoluble beta-1,3-glucan polysaccharide, and to laminarin, a water-soluble beta-1,3-glucan polysaccharide containing beta-1,6 branches. Also binds to lipopolysaccharide and lipoteichoic acid. In Plodia interpunctella (Indianmeal moth), this protein is Beta-1,3-glucan-binding protein.